A 356-amino-acid polypeptide reads, in one-letter code: S-adenosylmethionine:tRNA ribosyltransferase-isomerase (356 aa).

It belongs to the QueA family. Monomer.

It localises to the cytoplasm. The catalysed reaction is 7-aminomethyl-7-carbaguanosine(34) in tRNA + S-adenosyl-L-methionine = epoxyqueuosine(34) in tRNA + adenine + L-methionine + 2 H(+). Its pathway is tRNA modification; tRNA-queuosine biosynthesis. Its function is as follows. Transfers and isomerizes the ribose moiety from AdoMet to the 7-aminomethyl group of 7-deazaguanine (preQ1-tRNA) to give epoxyqueuosine (oQ-tRNA). This is S-adenosylmethionine:tRNA ribosyltransferase-isomerase from Xanthomonas campestris pv. campestris (strain B100).